Here is a 181-residue protein sequence, read N- to C-terminus: Small ribosomal subunit protein uS4 (181 aa).

An S4 RNA-binding domain is found at 106–168 (RRLQTLVYRK…PTSRIVKAKV (63 aa)).

This sequence belongs to the universal ribosomal protein uS4 family. As to quaternary structure, part of the 30S ribosomal subunit. Contacts protein S5. The interaction surface between S4 and S5 is involved in control of translational fidelity.

In terms of biological role, one of the primary rRNA binding proteins, it binds directly to 16S rRNA where it nucleates assembly of the body of the 30S subunit. Its function is as follows. With S5 and S12 plays an important role in translational accuracy. The chain is Small ribosomal subunit protein uS4 from Caldivirga maquilingensis (strain ATCC 700844 / DSM 13496 / JCM 10307 / IC-167).